Consider the following 171-residue polypeptide: T-cell surface glycoprotein CD3 delta chain (171 aa).

An N-terminal signal peptide occupies residues Met-1–Pro-21. The Extracellular portion of the chain corresponds to Phe-22 to Ala-105. Cysteines 37 and 73 form a disulfide. N-linked (GlcNAc...) asparagine glycans are attached at residues Asn-38, Asn-54, and Asn-74. Residues Gly-106–Ala-126 traverse the membrane as a helical segment. Over Gly-127–Lys-171 the chain is Cytoplasmic. Positions Asp-138 to Asn-166 constitute an ITAM domain. A phosphotyrosine mark is found at Tyr-149 and Tyr-160.

As to quaternary structure, the TCR-CD3 complex is composed of a CD3D/CD3E and a CD3G/CD3E heterodimers that preferentially associate with TCRalpha and TCRbeta, respectively, to form TCRalpha/CD3E/CD3G and TCRbeta/CD3G/CD3E trimers. In turn, the hexamer interacts with CD3Z homodimer to form the TCR-CD3 complex. Alternatively, TCRalpha and TCRbeta can be replaced by TCRgamma and TCRdelta. Interacts with coreceptors CD4 and CD8. Post-translationally, phosphorylated on Tyr residues after T-cell receptor triggering by LCK in association with CD4/CD8. CD3D is mostly present on T-lymphocytes with its TCR-CD3 partners. Present also in fetal NK-cells.

The protein resides in the cell membrane. Its function is as follows. Part of the TCR-CD3 complex present on T-lymphocyte cell surface that plays an essential role in adaptive immune response. When antigen presenting cells (APCs) activate T-cell receptor (TCR), TCR-mediated signals are transmitted across the cell membrane by the CD3 chains CD3D, CD3E, CD3G and CD3Z. All CD3 chains contain immunoreceptor tyrosine-based activation motifs (ITAMs) in their cytoplasmic domain. Upon TCR engagement, these motifs become phosphorylated by Src family protein tyrosine kinases LCK and FYN, resulting in the activation of downstream signaling pathways. In addition of this role of signal transduction in T-cell activation, CD3D plays an essential role in thymocyte differentiation. Indeed, participates in correct intracellular TCR-CD3 complex assembly and surface expression. In absence of a functional TCR-CD3 complex, thymocytes are unable to differentiate properly. Interacts with CD4 and CD8 and thus serves to establish a functional link between the TCR and coreceptors CD4 and CD8, which is needed for activation and positive selection of CD4 or CD8 T-cells. This Macaca fascicularis (Crab-eating macaque) protein is T-cell surface glycoprotein CD3 delta chain (CD3D).